Reading from the N-terminus, the 474-residue chain is Solute carrier family 49 member A3 (474 aa).

The tract at residues 1-20 (MEGESAETEPLIQSSSAADR) is disordered. The next 12 helical transmembrane spans lie at 38–58 (WFILSVLCLLNCSNAMAWLTF), 69–89 (LCVSLPLVNWLSLVFVLAAVV), 105–126 (CSLIGSSWLNACGCVLRVCGVL), 134–154 (VFAVVMCGQTLCALAQPLVIF), 175–195 (LASMANTVGLLLANLLSPLIV), 201–221 (LFLLLLIYSIPAAVACLLATL), 258–278 (WILLLCFGSGIGIFTCFSTLL), 290–310 (GFAGVCGAVSIVCGVAGAFLL), 326–346 (ICMCLTSVSCSAFAVVSQLPA), 349–369 (VLLVLVCCCFGLFGYSVYPVG), 388–408 (LIFTSGQIQAALYLLLLQALA), and 428–448 (VPVLVMAGVCAISSCVFVVFF).

It belongs to the major facilitator superfamily.

The protein resides in the membrane. This Danio rerio (Zebrafish) protein is Solute carrier family 49 member A3 (slc49a3).